The sequence spans 222 residues: Ethylene-inducing xylanase 2 (222 aa).

An N-terminal signal peptide occupies residues 1–19; that stretch reads MITFSSLLVTFSAISTSLA. Positions 36-222 constitute a GH11 domain; the sequence is QRNESSLVRR…GEGAATQTVS (187 aa). Asn-38 and Asn-94 each carry an N-linked (GlcNAc...) asparagine glycan. Glu-120 acts as the Nucleophile in catalysis. Glu-209 (proton donor) is an active-site residue.

This sequence belongs to the glycosyl hydrolase 11 (cellulase G) family.

It carries out the reaction Endohydrolysis of (1-&gt;4)-beta-D-xylosidic linkages in xylans.. It participates in glycan degradation; xylan degradation. Endo-1,4-beta-xylanase involved in the hydrolysis of xylan, a major structural heterogeneous polysaccharide found in plant biomass representing the second most abundant polysaccharide in the biosphere, after cellulose. May act as an elicitor of plant defense responses in certain plants but does not exhibit any cell death when transiently expressed in N.benthamiana. The protein is Ethylene-inducing xylanase 2 of Botryotinia fuckeliana (strain B05.10) (Noble rot fungus).